We begin with the raw amino-acid sequence, 588 residues long: 2-isopropylmalate synthase (588 aa).

Positions 40–314 (PRWCAVDLRD…DPQIDFSDLD (275 aa)) constitute a Pyruvate carboxyltransferase domain. Residues aspartate 49, histidine 253, histidine 255, and asparagine 289 each contribute to the Mg(2+) site. Positions 456-588 (APLDRVEEKW…TVREPELAAV (133 aa)) are regulatory domain.

It belongs to the alpha-IPM synthase/homocitrate synthase family. LeuA type 2 subfamily. In terms of assembly, homodimer. Requires Mg(2+) as cofactor.

Its subcellular location is the cytoplasm. It catalyses the reaction 3-methyl-2-oxobutanoate + acetyl-CoA + H2O = (2S)-2-isopropylmalate + CoA + H(+). It participates in amino-acid biosynthesis; L-leucine biosynthesis; L-leucine from 3-methyl-2-oxobutanoate: step 1/4. Catalyzes the condensation of the acetyl group of acetyl-CoA with 3-methyl-2-oxobutanoate (2-ketoisovalerate) to form 3-carboxy-3-hydroxy-4-methylpentanoate (2-isopropylmalate). The chain is 2-isopropylmalate synthase from Clavibacter michiganensis subsp. michiganensis (strain NCPPB 382).